The chain runs to 481 residues: Keratin, type II cuticular Hb1 (481 aa).

Residues 1 to 106 (MTCGSGFCGR…PNAQCVKHEE (106 aa)) form a head region. Residues 106–417 (EKEQIKCLNS…RLLEGEEQRL (312 aa)) enclose the IF rod domain. Positions 107 to 141 (KEQIKCLNSKFAAFIDKVRFLEQQNKLLETKWQFY) are coil 1A. The linker 1 stretch occupies residues 142 to 151 (QNRKCCESNM). A coil 1B region spans residues 152–252 (EPLFEGYIEA…YDEETRILHS (101 aa)). K212 participates in a covalent cross-link: Glycyl lysine isopeptide (Lys-Gly) (interchain with G-Cter in SUMO1). The linker 12 stretch occupies residues 253-269 (HISDTSIVVKMDNSRDL). The tract at residues 270-413 (NMDCVVAEIK…TTYRRLLEGE (144 aa)) is coil 2. The segment at 414–481 (EQRLCEGVGA…GSAVSCGRKC (68 aa)) is tail.

Belongs to the intermediate filament family. In terms of assembly, heterotetramer of two type I and two type II keratins. In terms of tissue distribution, expressed in dorsal skin.

This Mus musculus (Mouse) protein is Keratin, type II cuticular Hb1.